A 282-amino-acid polypeptide reads, in one-letter code: ATP phosphoribosyltransferase (282 aa).

The protein belongs to the ATP phosphoribosyltransferase family. Long subfamily. Requires Mg(2+) as cofactor.

Its subcellular location is the cytoplasm. The enzyme catalyses 1-(5-phospho-beta-D-ribosyl)-ATP + diphosphate = 5-phospho-alpha-D-ribose 1-diphosphate + ATP. Its pathway is amino-acid biosynthesis; L-histidine biosynthesis; L-histidine from 5-phospho-alpha-D-ribose 1-diphosphate: step 1/9. Feedback inhibited by histidine. Its function is as follows. Catalyzes the condensation of ATP and 5-phosphoribose 1-diphosphate to form N'-(5'-phosphoribosyl)-ATP (PR-ATP). Has a crucial role in the pathway because the rate of histidine biosynthesis seems to be controlled primarily by regulation of HisG enzymatic activity. The protein is ATP phosphoribosyltransferase of Pyrobaculum islandicum (strain DSM 4184 / JCM 9189 / GEO3).